The following is a 157-amino-acid chain: MAEKNERPIKVIAENRKARFNYAIEDTLEAGIALTGTEVKSIRNGKSTIAESYADPKDGEIWLINANIPEYLQANRFNHEPKRPRKLLLHRKQINKLMGAVERQGMTLVPLKMYFNERGRVKLQLALAKGKQLHDKRDTEKKRDWSREKGRIMRARG.

Residues 131–157 (KQLHDKRDTEKKRDWSREKGRIMRARG) are disordered. The segment covering 132-151 (QLHDKRDTEKKRDWSREKGR) has biased composition (basic and acidic residues).

Belongs to the SmpB family.

The protein localises to the cytoplasm. Required for rescue of stalled ribosomes mediated by trans-translation. Binds to transfer-messenger RNA (tmRNA), required for stable association of tmRNA with ribosomes. tmRNA and SmpB together mimic tRNA shape, replacing the anticodon stem-loop with SmpB. tmRNA is encoded by the ssrA gene; the 2 termini fold to resemble tRNA(Ala) and it encodes a 'tag peptide', a short internal open reading frame. During trans-translation Ala-aminoacylated tmRNA acts like a tRNA, entering the A-site of stalled ribosomes, displacing the stalled mRNA. The ribosome then switches to translate the ORF on the tmRNA; the nascent peptide is terminated with the 'tag peptide' encoded by the tmRNA and targeted for degradation. The ribosome is freed to recommence translation, which seems to be the essential function of trans-translation. This chain is SsrA-binding protein, found in Rhodopseudomonas palustris (strain BisB18).